We begin with the raw amino-acid sequence, 353 residues long: Serine/threonine-protein phosphatase 2A activator 1 (353 aa).

Residues 331–353 (ANNATTKMPPPLSTSTSRFIHRR) are disordered. Residues 343–353 (STSTSRFIHRR) show a composition bias toward polar residues.

This sequence belongs to the PTPA-type PPIase family.

The protein localises to the cytoplasm. It is found in the nucleus. It catalyses the reaction [protein]-peptidylproline (omega=180) = [protein]-peptidylproline (omega=0). Functionally, PPIases accelerate the folding of proteins. It catalyzes the cis-trans isomerization of proline imidic peptide bonds in oligopeptides. Acts as a regulatory subunit for PP2A-like phosphatases modulating their activity or substrate specificity, probably by inducing a conformational change in the catalytic subunit, a direct target of the PPIase. Can reactivate inactive phosphatase PP2A-phosphatase methylesterase complexes (PP2Ai) in presence of ATP and Mg(2+) by dissociating the inactive form from the complex. This chain is Serine/threonine-protein phosphatase 2A activator 1 (RRD1), found in Kluyveromyces lactis (strain ATCC 8585 / CBS 2359 / DSM 70799 / NBRC 1267 / NRRL Y-1140 / WM37) (Yeast).